The sequence spans 90 residues: Small ribosomal subunit protein uS17 (90 aa).

It belongs to the universal ribosomal protein uS17 family. In terms of assembly, part of the 30S ribosomal subunit.

Its function is as follows. One of the primary rRNA binding proteins, it binds specifically to the 5'-end of 16S ribosomal RNA. This chain is Small ribosomal subunit protein uS17, found in Paraburkholderia phytofirmans (strain DSM 17436 / LMG 22146 / PsJN) (Burkholderia phytofirmans).